The following is a 237-amino-acid chain: KH homology domain-containing protein 1 (237 aa).

2 helical membrane passes run 7-29 and 33-50; these read RLFR…FIYG and LQTL…HLWI. Residues 96–155 form the KH; atypical domain; sequence PMVFHMEEDQEELIFGHGDTYLRCIEVHSHTLIQLESWFTATGQTRVTVVGPHRARQWLL.

It belongs to the KHDC1 family.

It is found in the membrane. This is KH homology domain-containing protein 1 from Homo sapiens (Human).